Consider the following 116-residue polypeptide: Ly-6/neurotoxin-like protein 1 (116 aa).

The signal sequence occupies residues methionine 1–alanine 20. One can recognise a UPAR/Ly6 domain in the interval leucine 21 to leucine 104. Intrachain disulfides connect cysteine 23/cysteine 46, cysteine 26/cysteine 33, cysteine 39/cysteine 64, cysteine 68/cysteine 85, and cysteine 86/cysteine 91. Residue asparagine 92 is the site of GPI-anchor amidated asparagine attachment. Positions glycine 93–leucine 116 are cleaved as a propeptide — removed in mature form.

Interacts with nAChRs containing alpha-4:beta-2 (CHRNA4:CHRNB2) and alpha-7 (CHRNA7) subunits. Interacts with CHRNA4 probably in the endoplasmic reticulum prior to nAChR pentameric assembly. Interacts with KCNA2/Potassium voltage-gated channel subfamily A member 2. In terms of tissue distribution, expressed in neurons of multiple regions in the CNS, including the cerebral cortex, thalamus, substantia nigra, cerebellum, amygdala and hippocampus. Also expressed in kidney, heart and thymus, but at lower levels than in the brain. Expressed in the primary visual cortex (V1) and the lateral geniculate nucleus (at protein level).

It localises to the cell membrane. The protein localises to the cell projection. It is found in the dendrite. The protein resides in the endoplasmic reticulum. Acts in different tissues through interaction to nicotinic acetylcholine receptors (nAChRs). The proposed role as modulator of nAChR activity seems to be dependent on the nAChR subtype and stoichiometry, and to involve an effect on nAChR trafficking and its cell surface expression, and on single channel properties of the nAChR inserted in the plasma membrane. Modulates functional properties of nicotinic acetylcholine receptors (nAChRs) to prevent excessive excitation, and hence neurodegeneration. Enhances desensitization by increasing both the rate and extent of desensitization of alpha-4:beta-2-containing nAChRs and slowing recovery from desensitization. Promotes large amplitude ACh-evoked currents through alpha-4:beta-2 nAChRs. Is involved in regulation of the nAChR pentameric assembly in the endoplasmic reticulum. Shifts stoichiometry from high sensitivity alpha-4(2):beta-2(3) to low sensitivity alpha-4(3):beta-2(2) nAChR. In vitro modulates alpha-3:beta-4-containing nAChRs. Reduces cell surface expression of (alpha-3:beta-4)(2):beta-4 and (alpha-3:beta-4)(2):alpha-5 nAChRs suggesting an interaction with nAChR alpha-3(-):(+)beta-4 subunit interfaces and an allosteric mode. Corresponding single channel effects characterized by decreased unitary conductance, altered burst proportions and enhanced desensitization/inactivation seem to depend on nAChR alpha:alpha subunit interfaces and are greater in (alpha-3:beta-2)(2):alpha-3 when compared to (alpha-3:beta-2)(2):alpha-5 nAChRs. Prevents plasticity in the primary visual cortex late in life. The chain is Ly-6/neurotoxin-like protein 1 from Mus musculus (Mouse).